The following is a 340-amino-acid chain: tRNA N6-adenosine threonylcarbamoyltransferase (340 aa).

His-113 and His-117 together coordinate Fe cation. Residues 135 to 139, Asp-169, Gly-182, Asp-186, and Asn-274 contribute to the substrate site; that span reads LVSGG. Asp-302 provides a ligand contact to Fe cation.

It belongs to the KAE1 / TsaD family. It depends on Fe(2+) as a cofactor.

The protein localises to the cytoplasm. The enzyme catalyses L-threonylcarbamoyladenylate + adenosine(37) in tRNA = N(6)-L-threonylcarbamoyladenosine(37) in tRNA + AMP + H(+). Functionally, required for the formation of a threonylcarbamoyl group on adenosine at position 37 (t(6)A37) in tRNAs that read codons beginning with adenine. Is involved in the transfer of the threonylcarbamoyl moiety of threonylcarbamoyl-AMP (TC-AMP) to the N6 group of A37, together with TsaE and TsaB. TsaD likely plays a direct catalytic role in this reaction. The protein is tRNA N6-adenosine threonylcarbamoyltransferase of Mycolicibacterium smegmatis (strain ATCC 700084 / mc(2)155) (Mycobacterium smegmatis).